A 143-amino-acid polypeptide reads, in one-letter code: uncharacterized protein (143 aa).

One can recognise an HTH marR-type domain in the interval 11 to 139 (EYELTTFIRR…FGELLQRMNK (129 aa)). A DNA-binding region (H-T-H motif) is located at residues 53–76 (VKELAESFKLDISTLSRQAAALEA).

This is an uncharacterized protein from Bacillus subtilis (strain 168).